The sequence spans 203 residues: Probable proteasome subunit beta type-4 (203 aa).

Belongs to the peptidase T1B family. In terms of assembly, the 26S proteasome consists of a 20S proteasome core and two 19S regulatory subunits. The 20S proteasome core is composed of 28 subunits that are arranged in four stacked rings, resulting in a barrel-shaped structure. The two end rings are each formed by seven alpha subunits, and the two central rings are each formed by seven beta subunits. The catalytic chamber with the active sites is on the inside of the barrel.

Its subcellular location is the cytoplasm. It localises to the nucleus. Non-catalytic component of the proteasome, a multicatalytic proteinase complex which is characterized by its ability to cleave peptides with Arg, Phe, Tyr, Leu, and Glu adjacent to the leaving group at neutral or slightly basic pH. The proteasome has an ATP-dependent proteolytic activity. The chain is Probable proteasome subunit beta type-4 (pcb-4) from Neurospora crassa (strain ATCC 24698 / 74-OR23-1A / CBS 708.71 / DSM 1257 / FGSC 987).